Consider the following 598-residue polypeptide: Cytochrome P450 monooxygenase phmB (598 aa).

A helical membrane pass occupies residues 107–127 (VAAKIAALLFVAGLFWAVSVL). N-linked (GlcNAc...) asparagine glycosylation is found at Asn171, Asn428, and Asn494. Cys542 contributes to the heme binding site. Asn549 and Asn581 each carry an N-linked (GlcNAc...) asparagine glycan.

Belongs to the cytochrome P450 family. Heme serves as cofactor.

It is found in the membrane. It participates in mycotoxin biosynthesis. In terms of biological role, cytochrome P450 monooxygenase; part of the gene cluster that mediates the biosynthesis of the mycotoxins phomacins, leucine-derived cytochalasans with potent actin polymerization-inhibitory activities and monocot-specific antigerminative activities. The first step in the pathway is catalyzed by the hybrid PKS-NRPS phmA, assisted by the enoyl reductase phmE, that are responsible for fusion of the leucine precursor and the polyketide backbone to produce a 2-pyrrolidone intermediate. The polyketide synthase module (PKS) of phmA is responsible for the synthesis of the polyketide backbone and the downstream nonribosomal peptide synthetase (NRPS) amidates the carboxyl end of the polyketide with the leucine precursor. Because phmA lacks a designated enoylreductase (ER) domain, the required activity is provided the enoyl reductase phmE. Reduction by the hydrolyase phmG, followed by dehydration and intra-molecular Diels-Alder cyclization by the Diels-Alderase phmD then yield the required isoindolone-fused macrocycle. A number of oxidative steps catalyzed by the tailoring cytochrome P450 monooxygenase phmB, the FAD-linked oxidoreductase phmC and the short-chain dehydrogenase/reductase phmF, are further required to afford the final products, phomacin D and phomacin E. This chain is Cytochrome P450 monooxygenase phmB, found in Phaeosphaeria nodorum (strain SN15 / ATCC MYA-4574 / FGSC 10173) (Glume blotch fungus).